The primary structure comprises 743 residues: GTPase-activating protein gyp7 (743 aa).

In terms of domain architecture, Rab-GAP TBC spans 411-633 (GIQPSLRKEV…KLWDVLFTNY (223 aa)).

It localises to the cytoplasm. Its subcellular location is the nucleus. In terms of biological role, most effectively accelerates the intrinsic GTPase activity of ypt7. This chain is GTPase-activating protein gyp7, found in Schizosaccharomyces pombe (strain 972 / ATCC 24843) (Fission yeast).